The following is an 804-amino-acid chain: Leucine--tRNA ligase (804 aa).

Residues 39 to 50 carry the 'HIGH' region motif; it reads PFPSGKGLHVGH. The 'KMSKS' region motif lies at 573-577; that stretch reads KMSKS. K576 contacts ATP.

This sequence belongs to the class-I aminoacyl-tRNA synthetase family.

It is found in the cytoplasm. The catalysed reaction is tRNA(Leu) + L-leucine + ATP = L-leucyl-tRNA(Leu) + AMP + diphosphate. The polypeptide is Leucine--tRNA ligase (Lactobacillus acidophilus (strain ATCC 700396 / NCK56 / N2 / NCFM)).